The primary structure comprises 418 residues: Glutamyl-tRNA reductase (418 aa).

Substrate-binding positions include 49 to 52 (TCNR), Ser-109, 114 to 116 (EPQ), and Gln-120. Cys-50 functions as the Nucleophile in the catalytic mechanism. 189-194 (GAGETI) serves as a coordination point for NADP(+).

The protein belongs to the glutamyl-tRNA reductase family. In terms of assembly, homodimer.

The catalysed reaction is (S)-4-amino-5-oxopentanoate + tRNA(Glu) + NADP(+) = L-glutamyl-tRNA(Glu) + NADPH + H(+). Its pathway is porphyrin-containing compound metabolism; protoporphyrin-IX biosynthesis; 5-aminolevulinate from L-glutamyl-tRNA(Glu): step 1/2. Functionally, catalyzes the NADPH-dependent reduction of glutamyl-tRNA(Glu) to glutamate 1-semialdehyde (GSA). The protein is Glutamyl-tRNA reductase of Citrobacter koseri (strain ATCC BAA-895 / CDC 4225-83 / SGSC4696).